Here is a 463-residue protein sequence, read N- to C-terminus: Cysteine--tRNA ligase (463 aa).

Residue Cys33 coordinates Zn(2+). The short motif at 35–45 (PTVYDFAHIGN) is the 'HIGH' region element. Residues Cys221, His246, and Glu250 each coordinate Zn(2+). The 'KMSKS' region signature appears at 279–283 (KMSKS). Lys282 provides a ligand contact to ATP.

Belongs to the class-I aminoacyl-tRNA synthetase family. In terms of assembly, monomer. Zn(2+) is required as a cofactor.

Its subcellular location is the cytoplasm. The catalysed reaction is tRNA(Cys) + L-cysteine + ATP = L-cysteinyl-tRNA(Cys) + AMP + diphosphate. This is Cysteine--tRNA ligase from Rhizobium rhizogenes (strain K84 / ATCC BAA-868) (Agrobacterium radiobacter).